A 562-amino-acid chain; its full sequence is Serine palmitoyltransferase 2 (562 aa).

A helical transmembrane segment spans residues 67-87 (PMLVAVLTYVGYGVLTLFGYL). At K379 the chain carries N6-(pyridoxal phosphate)lysine.

It belongs to the class-II pyridoxal-phosphate-dependent aminotransferase family. As to quaternary structure, component of the serine palmitoyltransferase (SPT) complex, which is composed of SPTLC1, SPTLC2 or SPTLC3 and SPTSSA or SPTSSB. The heterodimer consisting of SPTLC1 and SPTLC2/SPTLC3 forms the catalytic core of the enzyme, while SPTSSA or SPTSSB subunits determine substrate specificity. SPT also interacts with ORMDL proteins, especially ORMDL3, which negatively regulate SPT activity in the presence of ceramides. Forms dimers of heterodimers with SPTLC1. Requires pyridoxal 5'-phosphate as cofactor. As to expression, widely expressed.

Its subcellular location is the endoplasmic reticulum membrane. The catalysed reaction is L-serine + hexadecanoyl-CoA + H(+) = 3-oxosphinganine + CO2 + CoA. It carries out the reaction octadecanoyl-CoA + L-serine + H(+) = 3-oxoeicosasphinganine + CO2 + CoA. It participates in lipid metabolism; sphingolipid metabolism. With respect to regulation, SPT complex catalytic activity is negatively regulated by ORMDL proteins, including ORMDL3, in the presence of ceramides. This mechanism allows to maintain ceramide levels at sufficient concentrations for the production of complex sphingolipids, but which prevents the accumulation of ceramides to levels that trigger apoptosis. In terms of biological role, component of the serine palmitoyltransferase multisubunit enzyme (SPT) that catalyzes the initial and rate-limiting step in sphingolipid biosynthesis by condensing L-serine and activated acyl-CoA (most commonly palmitoyl-CoA) to form long-chain bases. The SPT complex is composed of SPTLC1, SPTLC2 or SPTLC3 and SPTSSA or SPTSSB. Within this complex, the heterodimer consisting of SPTLC1 and SPTLC2/SPTLC3 forms the catalytic core. The composition of the serine palmitoyltransferase (SPT) complex determines the substrate preference. The SPTLC1-SPTLC2-SPTSSA complex shows a strong preference for C16-CoA substrate, while the SPTLC1-SPTLC3-SPTSSA isozyme uses both C14-CoA and C16-CoA as substrates, with a slight preference for C14-CoA. The SPTLC1-SPTLC2-SPTSSB complex shows a strong preference for C18-CoA substrate, while the SPTLC1-SPTLC3-SPTSSB isozyme displays an ability to use a broader range of acyl-CoAs, without apparent preference. Crucial for adipogenesis. In Homo sapiens (Human), this protein is Serine palmitoyltransferase 2.